Consider the following 345-residue polypeptide: Anthranilate phosphoribosyltransferase (345 aa).

5-phospho-alpha-D-ribose 1-diphosphate is bound by residues Gly-80, 83–84 (GD), Thr-88, 90–93 (NIST), 108–116 (KHGNRSVSS), and Ser-120. Gly-80 serves as a coordination point for anthranilate. Residue Ser-92 coordinates Mg(2+). Residue Asn-111 participates in anthranilate binding. Arg-166 lines the anthranilate pocket. Mg(2+) is bound by residues Asp-225 and Glu-226.

The protein belongs to the anthranilate phosphoribosyltransferase family. Homodimer. Mg(2+) is required as a cofactor.

The catalysed reaction is N-(5-phospho-beta-D-ribosyl)anthranilate + diphosphate = 5-phospho-alpha-D-ribose 1-diphosphate + anthranilate. The protein operates within amino-acid biosynthesis; L-tryptophan biosynthesis; L-tryptophan from chorismate: step 2/5. Functionally, catalyzes the transfer of the phosphoribosyl group of 5-phosphorylribose-1-pyrophosphate (PRPP) to anthranilate to yield N-(5'-phosphoribosyl)-anthranilate (PRA). The chain is Anthranilate phosphoribosyltransferase from Acetivibrio thermocellus (strain ATCC 27405 / DSM 1237 / JCM 9322 / NBRC 103400 / NCIMB 10682 / NRRL B-4536 / VPI 7372) (Clostridium thermocellum).